A 5082-amino-acid polypeptide reads, in one-letter code: Malformin synthetase mlfA (5082 aa).

The interval 225–616 is adenylation 1; that stretch reads ERHAANRPHS…CGRADTQVKL (392 aa). The region spanning 749 to 822 is the Carrier 1 domain; the sequence is SRLEQKIQLA…EAASLAEVQE (74 aa). Ser783 carries the O-(pantetheine 4'-phosphoryl)serine modification. Residues 860-1291 form a condensation 1 region; that stretch reads ENVFPCTTMQ…ALNTLSLLQA (432 aa). Positions 1319–1708 are adenylation 2; sequence DRWVTRQPEG…GRKDTQVKLR (390 aa). In terms of domain architecture, Carrier 2 spans 1846–1923; it reads TPTLELERTL…QLAAEVGEPA (78 aa). Ser1883 bears the O-(pantetheine 4'-phosphoryl)serine mark. Disordered stretches follow at residues 1924–1953 and 1986–2012; these read GQSA…DGVD and GGSS…KKNA. Low complexity-rich tracts occupy residues 1926 to 1950 and 1988 to 2005; these read SASS…STND and SSSN…SSSS. The interval 2058–2473 is condensation 2; the sequence is EDIYPATALQ…AVSCSDKETL (416 aa). Positions 2496-2888 are adenylation 3; the sequence is RRTPHAPAVC…IGRRDGQLKL (393 aa). The Carrier 3 domain maps to 3024–3100; sequence RPVTSQEHEM…QLICHLNTIR (77 aa). O-(pantetheine 4'-phosphoryl)serine is present on Ser3061. Condensation stretches follow at residues 3117 to 3582 and 3603 to 4022; these read WVAL…TYDQ and NIYP…EHLV. The tract at residues 4047 to 4426 is adenylation 4; the sequence is HNSRQAVFDD…VGRKDNQIKF (380 aa). One can recognise a Carrier 4 domain in the interval 4560–4636; the sequence is MPSTAAERKM…DLSDQAKSLI (77 aa). Ser4597 is subject to O-(pantetheine 4'-phosphoryl)serine. The condensation 5 stretch occupies residues 4673–5000; that stretch reads DVLPTTSFQR…LQTIVQHQNN (328 aa).

Belongs to the NRP synthetase family.

It functions in the pathway secondary metabolite biosynthesis. Nonribosomal peptide synthetase; part of the gene cluster that mediates the biosynthesis of malformins, cyclic pentapeptides with a disulfide bond between 2 consecutive cysteins, that show potential anti-tumor as well as antimalarial and antitrypanosomal properties. The nonribosomal peptide synthetase mlfA is responsible of the formation of the cyclic pentapeptide. The malformin biosynthesis clusters in malformin-producing fungi also contain enzymes involved in the formation of the disulfide bond between the two consecutive cysteins within malformins, in addition to additional tailoring enzymes such as methyltransferases or oxidoreductases. They are also composed of up to 4 major facilitator superfamily transporters, and transcription factors probably involved in the regulation of the expression of those clusters. The polypeptide is Malformin synthetase mlfA (Aspergillus luchuensis (strain CBS 106.47)).